Here is a 611-residue protein sequence, read N- to C-terminus: Leukotriene A-4 hydrolase (611 aa).

Lysine 73 is modified (N6-acetyllysine). A peptide is bound by residues 135–137 (QCQ) and 267–272 (SYGGME). Residue histidine 296 participates in Zn(2+) binding. The active-site Proton acceptor is glutamate 297. 2 residues coordinate Zn(2+): histidine 300 and glutamate 319. The residue at position 337 (lysine 337) is an N6-acetyllysine. Residue tyrosine 384 is the Proton donor of the active site. Position 414 is an N6-acetyllysine (lysine 414). Serine 416 bears the Phosphoserine mark. 564–566 (RMK) lines the a peptide pocket. Lysine 573 carries the post-translational modification N6-acetyllysine.

The protein belongs to the peptidase M1 family. As to quaternary structure, monomer. Requires Zn(2+) as cofactor. Post-translationally, phosphorylation at Ser-416 inhibits leukotriene-A4 hydrolase activity. activity.

The protein localises to the cytoplasm. The catalysed reaction is leukotriene A4 + H2O = leukotriene B4. It catalyses the reaction (5S,6S)-epoxy-(18R)-hydroxy-(7E,9E,11Z,14Z,16E)-eicosapentaenoate + H2O = resolvin E1. It carries out the reaction (5S,6S)-epoxy-(18S)-hydroxy-(7E,9E,11Z,14Z,16E)-eicosapentaenoate + H2O = 18S-resolvin E1. The enzyme catalyses Release of the N-terminal residue from a tripeptide.. The protein operates within lipid metabolism; leukotriene B4 biosynthesis. Its activity is regulated as follows. Inhibited by bestatin. The epoxide hydrolase activity is restrained by suicide inactivation that involves binding of LTA4 to Tyr-379. 4-(4-benzylphenyl)thiazol-2-amine (ARM1) selectively inhibits the epoxide hydrolase activity. In terms of biological role, bifunctional zinc metalloenzyme that comprises both epoxide hydrolase (EH) and aminopeptidase activities. Acts as an epoxide hydrolase to catalyze the conversion of LTA4 to the pro-inflammatory mediator leukotriene B4 (LTB4). Also has aminopeptidase activity, with high affinity for N-terminal arginines of various synthetic tripeptides. In addition to its pro-inflammatory EH activity, may also counteract inflammation by its aminopeptidase activity, which inactivates by cleavage another neutrophil attractant, the tripeptide Pro-Gly-Pro (PGP), a bioactive fragment of collagen generated by the action of matrix metalloproteinase-9 (MMP9) and prolylendopeptidase (PREPL). Involved also in the biosynthesis of resolvin E1 and 18S-resolvin E1 from eicosapentaenoic acid, two lipid mediators that show potent anti-inflammatory and pro-resolving actions. The polypeptide is Leukotriene A-4 hydrolase (LTA4H) (Cavia porcellus (Guinea pig)).